The sequence spans 224 residues: 7-cyano-7-deazaguanine synthase (224 aa).

10 to 20 provides a ligand contact to ATP; that stretch reads LSGGLDSATVA. Residues Cys189, Cys199, Cys202, and Cys205 each contribute to the Zn(2+) site.

Belongs to the QueC family. Requires Zn(2+) as cofactor.

The catalysed reaction is 7-carboxy-7-deazaguanine + NH4(+) + ATP = 7-cyano-7-deazaguanine + ADP + phosphate + H2O + H(+). The protein operates within purine metabolism; 7-cyano-7-deazaguanine biosynthesis. Catalyzes the ATP-dependent conversion of 7-carboxy-7-deazaguanine (CDG) to 7-cyano-7-deazaguanine (preQ(0)). This Azotobacter vinelandii (strain DJ / ATCC BAA-1303) protein is 7-cyano-7-deazaguanine synthase.